The primary structure comprises 300 residues: Epimerase family protein SAR0825 (300 aa).

Belongs to the NAD(P)-dependent epimerase/dehydratase family. SDR39U1 subfamily.

The sequence is that of Epimerase family protein SAR0825 from Staphylococcus aureus (strain MRSA252).